A 132-amino-acid polypeptide reads, in one-letter code: Small ribosomal subunit protein uS8 (132 aa).

The protein belongs to the universal ribosomal protein uS8 family. As to quaternary structure, part of the 30S ribosomal subunit. Contacts proteins S5 and S12.

Functionally, one of the primary rRNA binding proteins, it binds directly to 16S rRNA central domain where it helps coordinate assembly of the platform of the 30S subunit. The polypeptide is Small ribosomal subunit protein uS8 (Bacillus cytotoxicus (strain DSM 22905 / CIP 110041 / 391-98 / NVH 391-98)).